The primary structure comprises 245 residues: Leucyl/phenylalanyl-tRNA--protein transferase (245 aa).

The protein belongs to the L/F-transferase family.

It localises to the cytoplasm. It catalyses the reaction N-terminal L-lysyl-[protein] + L-leucyl-tRNA(Leu) = N-terminal L-leucyl-L-lysyl-[protein] + tRNA(Leu) + H(+). The catalysed reaction is N-terminal L-arginyl-[protein] + L-leucyl-tRNA(Leu) = N-terminal L-leucyl-L-arginyl-[protein] + tRNA(Leu) + H(+). The enzyme catalyses L-phenylalanyl-tRNA(Phe) + an N-terminal L-alpha-aminoacyl-[protein] = an N-terminal L-phenylalanyl-L-alpha-aminoacyl-[protein] + tRNA(Phe). Its function is as follows. Functions in the N-end rule pathway of protein degradation where it conjugates Leu, Phe and, less efficiently, Met from aminoacyl-tRNAs to the N-termini of proteins containing an N-terminal arginine or lysine. The sequence is that of Leucyl/phenylalanyl-tRNA--protein transferase from Paraburkholderia phymatum (strain DSM 17167 / CIP 108236 / LMG 21445 / STM815) (Burkholderia phymatum).